Consider the following 615-residue polypeptide: Chaperone protein DnaK (615 aa).

Threonine 175 carries the phosphothreonine; by autocatalysis modification. Residues 573–615 (SQEMYQKAAQEQQAAQGAEQAQDNGPKDDNVVDADFKEVDEDK) are disordered. Residues 580 to 594 (AAQEQQAAQGAEQAQ) are compositionally biased toward low complexity. Basic and acidic residues predominate over residues 597 to 609 (GPKDDNVVDADFK).

It belongs to the heat shock protein 70 family.

In terms of biological role, acts as a chaperone. This is Chaperone protein DnaK from Clostridioides difficile (strain 630) (Peptoclostridium difficile).